Here is a 652-residue protein sequence, read N- to C-terminus: DNA ligase (652 aa).

Residues aspartate 29 to aspartate 33, serine 78 to leucine 79, and glutamate 107 each bind NAD(+). Lysine 109 (N6-AMP-lysine intermediate) is an active-site residue. NAD(+) contacts are provided by arginine 130, glutamate 164, lysine 278, and lysine 302. 4 residues coordinate Zn(2+): cysteine 395, cysteine 398, cysteine 413, and cysteine 418. Residues valine 577–leucine 652 form the BRCT domain.

It belongs to the NAD-dependent DNA ligase family. LigA subfamily. It depends on Mg(2+) as a cofactor. Mn(2+) is required as a cofactor.

It catalyses the reaction NAD(+) + (deoxyribonucleotide)n-3'-hydroxyl + 5'-phospho-(deoxyribonucleotide)m = (deoxyribonucleotide)n+m + AMP + beta-nicotinamide D-nucleotide.. Its function is as follows. DNA ligase that catalyzes the formation of phosphodiester linkages between 5'-phosphoryl and 3'-hydroxyl groups in double-stranded DNA using NAD as a coenzyme and as the energy source for the reaction. It is essential for DNA replication and repair of damaged DNA. This Streptococcus pneumoniae (strain JJA) protein is DNA ligase.